A 261-amino-acid chain; its full sequence is Uridine-cytidine kinase 2 (261 aa).

The disordered stretch occupies residues 1-24 (MAGDSEQALPKHSPQNGQPFLIGV). 26-34 (GGTASGKSS) is an ATP binding site. Asp83, Tyr111, His116, Arg165, Arg175, and Gln183 together coordinate substrate. Position 212 (Asp212) interacts with ATP. Over residues 238 to 247 (NGYTNGFTSP) the composition is skewed to polar residues. Residues 238 to 261 (NGYTNGFTSPRTRHPSDSNSSRPH) form a disordered region.

Belongs to the uridine kinase family. In terms of assembly, homotetramer.

The catalysed reaction is uridine + ATP = UMP + ADP + H(+). It catalyses the reaction cytidine + ATP = CMP + ADP + H(+). The protein operates within pyrimidine metabolism; CTP biosynthesis via salvage pathway; CTP from cytidine: step 1/3. It functions in the pathway pyrimidine metabolism; UMP biosynthesis via salvage pathway; UMP from uridine: step 1/1. Functionally, phosphorylates uridine and cytidine to uridine monophosphate and cytidine monophosphate. Does not phosphorylate deoxyribonucleosides or purine ribonucleosides. Can use ATP or GTP as a phosphate donor. This is Uridine-cytidine kinase 2 (uck2) from Xenopus tropicalis (Western clawed frog).